We begin with the raw amino-acid sequence, 369 residues long: Guanine nucleotide-binding protein subunit beta-2 (369 aa).

Residues 1–24 are compositionally biased toward polar residues; that stretch reads MSTIAGESSSSSKMPENSQPTTTE. The interval 1-28 is disordered; the sequence is MSTIAGESSSSSKMPENSQPTTTEKGSE. WD repeat units lie at residues 79-109, 121-151, 167-197, 209-241, 253-283, 297-327, and 339-369; these read GHVGKVLCMDWSLDKRHIVSSSQDGKVIVWD, MPTTWVMACAFSPSSQMIACGGLDNKCSVVP, THTSYMSCCTFLRSDNLILTGSGDSTCAIWD, GHTGDVFAIDVPKCDTGNTFISAGADKHSLVWD, GHEADINTVRFHPNGDAFATGSDDATCRLFD, SILFPVNGVDFSLSGRILFAGYGDYRVGVWD, and GHENRISCLRTSPDGTAVCSASWDCTIRIWA.

This sequence belongs to the WD repeat G protein beta family. As to quaternary structure, g proteins are composed of 3 units, alpha, beta and gamma. Interacts with G protein gamma subunits gpc-1 and gpc-2 and with egl-10 and eat-16.

Guanine nucleotide-binding proteins (G proteins) are involved as a modulator or transducer in various transmembrane signaling systems. The beta and gamma chains are required for the GTPase activity, for replacement of GDP by GTP, and for G protein-effector interaction. Plays a role in regulating dopamine-mediated locomotion behavior. This chain is Guanine nucleotide-binding protein subunit beta-2, found in Caenorhabditis elegans.